A 524-amino-acid polypeptide reads, in one-letter code: Glycoprotein (524 aa).

Residues 1-19 form the signal peptide; the sequence is MVPQVLLFVLLLGFSLCFG. Residues 20–459 are Virion surface-facing; that stretch reads KFPIYTIPDE…DLGLPNWGKY (440 aa). Cystine bridges form between Cys-43/Cys-302, Cys-54/Cys-226, Cys-80/Cys-113, Cys-178/Cys-188, Cys-208/Cys-247, and Cys-242/Cys-271. The N-linked (GlcNAc...) asparagine; by host glycan is linked to Asn-56. Asn-223 is a glycosylation site (N-linked (GlcNAc...) asparagine; by host). N-linked (GlcNAc...) asparagine; by host glycosylation is present at Asn-338. Cys-363 and Cys-370 are joined by a disulfide. The helical transmembrane segment at 460-480 threads the bilayer; sequence VLMTAGAMIGLVLIFSLMTWC. A lipid anchor (S-palmitoyl cysteine; by host) is attached at Cys-480. At 481–524 the chain is on the intravirion side; it reads RRANRPESKQRSFGGTGGNVSVTSQSGKVIPSWESYKSGGEIRL. The segment at 487–506 is disordered; the sequence is ESKQRSFGGTGGNVSVTSQS.

This sequence belongs to the lyssavirus glycoprotein family. Homotrimer. Interacts with matrix protein. Interacts with host TRFC. Interacts with host BST2; this interaction inhibits viral budding by tethering new virions to the cell surface. Interacts with ITGB1. Interacts with host GRM2. In terms of processing, glycosylated and palmitoylated by host. Glycosylation is crucial for glycoprotein export at the cell surface.

Its subcellular location is the virion membrane. Attaches the virus to host cellular receptor, inducing endocytosis of the virion by using different host proteins including TFRC, GRM2 and ITGB1. In the endosome, the acidic pH induces conformational changes in the glycoprotein trimer, which trigger fusion between virus and cell membrane. There is convincing in vitro evidence that the muscular form of the nicotinic acetylcholine receptor (nAChR), the neuronal cell adhesion molecule (NCAM), and the p75 neurotrophin receptor (p75NTR) bind glycoprotein and thereby facilitate rabies virus entry into cells. The chain is Glycoprotein (G) from Homo sapiens (Human).